Consider the following 252-residue polypeptide: Imidazole glycerol phosphate synthase subunit HisF (252 aa).

Residues D11 and D130 contribute to the active site.

It belongs to the HisA/HisF family. Heterodimer of HisH and HisF.

The protein localises to the cytoplasm. The enzyme catalyses 5-[(5-phospho-1-deoxy-D-ribulos-1-ylimino)methylamino]-1-(5-phospho-beta-D-ribosyl)imidazole-4-carboxamide + L-glutamine = D-erythro-1-(imidazol-4-yl)glycerol 3-phosphate + 5-amino-1-(5-phospho-beta-D-ribosyl)imidazole-4-carboxamide + L-glutamate + H(+). Its pathway is amino-acid biosynthesis; L-histidine biosynthesis; L-histidine from 5-phospho-alpha-D-ribose 1-diphosphate: step 5/9. Functionally, IGPS catalyzes the conversion of PRFAR and glutamine to IGP, AICAR and glutamate. The HisF subunit catalyzes the cyclization activity that produces IGP and AICAR from PRFAR using the ammonia provided by the HisH subunit. The polypeptide is Imidazole glycerol phosphate synthase subunit HisF (Persephonella marina (strain DSM 14350 / EX-H1)).